Consider the following 784-residue polypeptide: Ribosome biogenesis protein BOP1 homolog (784 aa).

Positions 1–11 (MTKKLALKRRG) are enriched in basic residues. Residues 1-159 (MTKKLALKRR…DSDTSDEEDI (159 aa)) form a disordered region. Acidic residues-rich tracts occupy residues 27–36 (SENEEEEEDL), 45–54 (EDSTDDEGID), 62–73 (SEELQFESDEEG), and 84–111 (AEED…EDEE). Basic and acidic residues-rich tracts occupy residues 112 to 123 (KDSKSKQTDDKP) and 138 to 148 (LPKRDSSKPEY). Acidic residues predominate over residues 149–158 (QDSDTSDEED). WD repeat units lie at residues 445–486 (GHTD…RTIE), 488–526 (DEVV…KVLV), 570–612 (THFK…SQIP), 615–653 (KSKG…LVKK), 656–695 (TNSK…KPYQ), 699–738 (LHRN…DLLQ), and 754–784 (RDEF…RLYT).

The protein belongs to the WD repeat BOP1/ERB1 family.

The protein resides in the nucleus. It is found in the nucleolus. Its subcellular location is the nucleoplasm. Functionally, required for maturation of ribosomal RNAs and formation of the large ribosomal subunit. This is Ribosome biogenesis protein BOP1 homolog from Drosophila melanogaster (Fruit fly).